The chain runs to 288 residues: Oxaloacetate decarboxylase (288 aa).

Substrate is bound at residue S47. Mg(2+) is bound at residue D85. R156 and H232 together coordinate substrate.

This sequence belongs to the isocitrate lyase/PEP mutase superfamily. Oxaloacetate decarboxylase family. In terms of assembly, homotetramer; dimer of dimers. Requires Mg(2+) as cofactor.

The catalysed reaction is oxaloacetate + H(+) = pyruvate + CO2. Functionally, catalyzes the decarboxylation of oxaloacetate into pyruvate. Seems to play a role in maintaining cellular concentrations of bicarbonate and pyruvate. The protein is Oxaloacetate decarboxylase of Bradyrhizobium diazoefficiens (strain JCM 10833 / BCRC 13528 / IAM 13628 / NBRC 14792 / USDA 110).